The primary structure comprises 229 residues: Potassium/proton antiporter CemA (229 aa).

3 helical membrane-spanning segments follow: residues 6–26, 107–127, and 189–209; these read AFIP…ISLC, ILHF…SFWG, and ILSG…KYWI.

The protein belongs to the CemA family.

Its subcellular location is the plastid. It is found in the chloroplast inner membrane. It catalyses the reaction K(+)(in) + H(+)(out) = K(+)(out) + H(+)(in). Contributes to K(+)/H(+) antiport activity by supporting proton efflux to control proton extrusion and homeostasis in chloroplasts in a light-dependent manner to modulate photosynthesis. Prevents excessive induction of non-photochemical quenching (NPQ) under continuous-light conditions. Indirectly promotes efficient inorganic carbon uptake into chloroplasts. The sequence is that of Potassium/proton antiporter CemA from Lepidium virginicum (Virginia pepperweed).